The primary structure comprises 179 residues: Large ribosomal subunit protein uL5 (179 aa).

It belongs to the universal ribosomal protein uL5 family. In terms of assembly, part of the 50S ribosomal subunit; part of the 5S rRNA/L5/L18/L25 subcomplex. Contacts the 5S rRNA and the P site tRNA. Forms a bridge to the 30S subunit in the 70S ribosome.

Its function is as follows. This is one of the proteins that bind and probably mediate the attachment of the 5S RNA into the large ribosomal subunit, where it forms part of the central protuberance. In the 70S ribosome it contacts protein S13 of the 30S subunit (bridge B1b), connecting the 2 subunits; this bridge is implicated in subunit movement. Contacts the P site tRNA; the 5S rRNA and some of its associated proteins might help stabilize positioning of ribosome-bound tRNAs. This is Large ribosomal subunit protein uL5 from Bordetella bronchiseptica (strain ATCC BAA-588 / NCTC 13252 / RB50) (Alcaligenes bronchisepticus).